The following is a 632-amino-acid chain: tRNA uridine 5-carboxymethylaminomethyl modification enzyme MnmG (632 aa).

13–18 (GGGHAG) is an FAD binding site. 273–287 (GPRYCPSIEDKIHRF) contributes to the NAD(+) binding site.

Belongs to the MnmG family. As to quaternary structure, homodimer. Heterotetramer of two MnmE and two MnmG subunits. FAD is required as a cofactor.

It is found in the cytoplasm. NAD-binding protein involved in the addition of a carboxymethylaminomethyl (cmnm) group at the wobble position (U34) of certain tRNAs, forming tRNA-cmnm(5)s(2)U34. The sequence is that of tRNA uridine 5-carboxymethylaminomethyl modification enzyme MnmG from Psychrobacter cryohalolentis (strain ATCC BAA-1226 / DSM 17306 / VKM B-2378 / K5).